The chain runs to 329 residues: Phosphatidylcholine:ceramide cholinephosphotransferase 3 (329 aa).

Residues Met-1–Gln-26 are Cytoplasmic-facing. The chain crosses the membrane as a helical span at residues Val-27–Ile-47. Residues Thr-48–Gly-74 lie on the Extracellular side of the membrane. A helical membrane pass occupies residues Met-75 to Phe-95. Residues Lys-96–Arg-147 lie on the Cytoplasmic side of the membrane. The chain crosses the membrane as a helical span at residues Phe-148–Leu-168. Topologically, residues Pro-169–Thr-211 are extracellular. The helical transmembrane segment at Val-212–Phe-232 threads the bilayer. A topological domain (cytoplasmic) is located at residue Arg-233. The helical transmembrane segment at Pro-234–Tyr-254 threads the bilayer. The Extracellular portion of the chain corresponds to Thr-255–Asp-257. Residues Val-258 to Gly-278 traverse the membrane as a helical segment. Residues Ala-279 to His-329 are Cytoplasmic-facing.

The protein belongs to the sphingomyelin synthase family.

The protein localises to the membrane. The enzyme catalyses an N-acylsphing-4-enine + a 1,2-diacyl-sn-glycero-3-phosphocholine = a sphingomyelin + a 1,2-diacyl-sn-glycerol. The catalysed reaction is an N-acylsphinganine + a 1,2-diacyl-sn-glycero-3-phosphocholine = an N-acylsphinganine-1-phosphocholine + a 1,2-diacyl-sn-glycerol. It carries out the reaction an N-acylsphing-4-enine + a 1,2-diacyl-sn-glycero-3-phosphoethanolamine = an N-acylsphing-4-enine 1-phosphoethanolamine + a 1,2-diacyl-sn-glycerol. It catalyses the reaction an N-acylsphinganine + a 1,2-diacyl-sn-glycero-3-phosphoethanolamine = an N-acylsphinganine-1-phosphoethanolamine + a 1,2-diacyl-sn-glycerol. Functionally, bifunctional sphingomyelin (SM)/ethanolamine phosphorylceramide (EPC) synthase with minimal inositol phosphorylceramide (IPC) synthase activity. Specificity is likely to be defined by residues in the lumenal catalytic domain that interact with the polar head groups of the phospholipid donors. SM is synthesized by both stages of the parasite life cycle, bloodstream forms (BSF) and procyclic forms (PCF), by transferring the phosphocholine from a 1,2-diacyl-sn-glycero-3-phosphocholine to an N-acylsphing-4-enine (ceramide) or an N-acylsphinganine (dihydroceramide). Similarly, EPC is synthesized by transferring phosphoethanolamine from a 1,2-diacyl-sn-glycero-3-phosphoethanolamine to ceramide or dihydroceramide by BSF and PCF, while IPC is confined to PCF. The ceramide/dihydroceramide ratios are skewed towards dihydroceramide in PCF parasites and ceramide in BSF parasites, this is likely due to differential expression and/or regulation of dihydroceramide desaturase, the enzyme responsible for converting dihydroceramide to ceramide. This chain is Phosphatidylcholine:ceramide cholinephosphotransferase 3, found in Trypanosoma brucei brucei.